The primary structure comprises 100 residues: Integration host factor subunit alpha (100 aa).

Positions 53–72 (FDLRDKRQRPGRNPKTGEEI) are disordered.

It belongs to the bacterial histone-like protein family. As to quaternary structure, heterodimer of an alpha and a beta chain.

This protein is one of the two subunits of integration host factor, a specific DNA-binding protein that functions in genetic recombination as well as in transcriptional and translational control. This is Integration host factor subunit alpha from Stutzerimonas stutzeri (strain A1501) (Pseudomonas stutzeri).